We begin with the raw amino-acid sequence, 254 residues long: Ubiquinone biosynthesis O-methyltransferase (254 aa).

S-adenosyl-L-methionine-binding residues include Arg-47, Gly-78, Asp-99, and Met-141.

It belongs to the methyltransferase superfamily. UbiG/COQ3 family.

The catalysed reaction is a 3-demethylubiquinol + S-adenosyl-L-methionine = a ubiquinol + S-adenosyl-L-homocysteine + H(+). The enzyme catalyses a 3-(all-trans-polyprenyl)benzene-1,2-diol + S-adenosyl-L-methionine = a 2-methoxy-6-(all-trans-polyprenyl)phenol + S-adenosyl-L-homocysteine + H(+). It participates in cofactor biosynthesis; ubiquinone biosynthesis. In terms of biological role, O-methyltransferase that catalyzes the 2 O-methylation steps in the ubiquinone biosynthetic pathway. The protein is Ubiquinone biosynthesis O-methyltransferase of Rhodopseudomonas palustris (strain BisB18).